A 170-amino-acid chain; its full sequence is MNLKDYIATIPNYPKEGIEFRDISPLMADGNAYSYAVREIVQYATDKQIDMIVGPEARGFIVGCPVAFELGIGFAPVRKPGKLPREVISADYEKEYGVDTLTMHADAIKPGQRVLIVDDLLATGGTVKATIEMIEKLGGIVAGCAFLIELDDLKGREAIGDYDYKVLMHY.

It belongs to the purine/pyrimidine phosphoribosyltransferase family. Homodimer.

The protein localises to the cytoplasm. It carries out the reaction AMP + diphosphate = 5-phospho-alpha-D-ribose 1-diphosphate + adenine. Its pathway is purine metabolism; AMP biosynthesis via salvage pathway; AMP from adenine: step 1/1. Catalyzes a salvage reaction resulting in the formation of AMP, that is energically less costly than de novo synthesis. The sequence is that of Adenine phosphoribosyltransferase from Streptococcus suis (strain 98HAH33).